We begin with the raw amino-acid sequence, 325 residues long: Neural proliferation differentiation and control protein 1 (325 aa).

A signal peptide spans 1–34 (MATPLPPPSPRHLRLLRLLLSGLVLGAALRGAAA). Positions 138 to 175 (QGLELGLPSTPGTPTPTPHTSLGSPVSSDPVHMSPLEP) are disordered. Residues 182–202 (GLALVLILAFCVAGAAALSVA) traverse the membrane as a helical segment. Serine 229 carries the post-translational modification Phosphoserine. The disordered stretch occupies residues 266–290 (EPPKELDTASSDEENEDGDFTVYEC). Acidic residues predominate over residues 275–284 (SSDEENEDGD).

Belongs to the NPDC1/cab-1 family. Strongly expressed in adult brain; especially in hippocampus, frontal lobe and temporal lobe.

The protein resides in the membrane. Its function is as follows. Suppresses oncogenic transformation in neural and non-neural cells and down-regulates neural cell proliferation. Might be involved in transcriptional regulation. This chain is Neural proliferation differentiation and control protein 1 (NPDC1), found in Homo sapiens (Human).